The following is a 385-amino-acid chain: Mannitol-1-phosphate 5-dehydrogenase (385 aa).

Position 3-14 (3-14 (ALQFGAGNIGRG)) interacts with NAD(+).

This sequence belongs to the mannitol dehydrogenase family.

It catalyses the reaction D-mannitol 1-phosphate + NAD(+) = beta-D-fructose 6-phosphate + NADH + H(+). The polypeptide is Mannitol-1-phosphate 5-dehydrogenase (mtlD) (Buchnera aphidicola subsp. Acyrthosiphon pisum (strain APS) (Acyrthosiphon pisum symbiotic bacterium)).